A 477-amino-acid polypeptide reads, in one-letter code: Cysteine--tRNA ligase (477 aa).

Cysteine 29 provides a ligand contact to Zn(2+). A 'HIGH' region motif is present at residues 31–41 (PTVYDFAHIGN). Positions 224, 249, and 253 each coordinate Zn(2+). The 'KMSKS' region signature appears at 282–286 (KMSKS). Residue lysine 285 coordinates ATP.

It belongs to the class-I aminoacyl-tRNA synthetase family. In terms of assembly, monomer. Zn(2+) is required as a cofactor.

It is found in the cytoplasm. The catalysed reaction is tRNA(Cys) + L-cysteine + ATP = L-cysteinyl-tRNA(Cys) + AMP + diphosphate. This Nitrobacter winogradskyi (strain ATCC 25391 / DSM 10237 / CIP 104748 / NCIMB 11846 / Nb-255) protein is Cysteine--tRNA ligase.